The primary structure comprises 49 residues: MSNETFEQNEPKPTKVEELQPGDVEAVEDSTPVREITQTDHINKAMLQI.

The disordered stretch occupies residues 1-49 (MSNETFEQNEPKPTKVEELQPGDVEAVEDSTPVREITQTDHINKAMLQI). Basic and acidic residues predominate over residues 9 to 18 (NEPKPTKVEE).

This is an uncharacterized protein from Dictyostelium discoideum (Social amoeba).